Here is a 512-residue protein sequence, read N- to C-terminus: Cytochrome P450 1A1 (512 aa).

The mitochondrial targeting signal stretch occupies residues 29-40 (SRPRVPKGLKNP). A glycan (O-linked (GlcNAc) serine) is linked at S67. F224 lines the substrate pocket. C457 serves as a coordination point for heme.

It belongs to the cytochrome P450 family. In terms of assembly, interacts with cytosolic chaperones HSP70 and HSP90; this interaction is required for initial targeting to mitochondria. Interacts (via mitochondrial targeting signal) with TOMM40 (via N-terminus); this interaction is required for translocation across the mitochondrial outer membrane. Requires heme as cofactor.

It localises to the endoplasmic reticulum membrane. The protein localises to the mitochondrion inner membrane. It is found in the microsome membrane. Its subcellular location is the cytoplasm. It catalyses the reaction an organic molecule + reduced [NADPH--hemoprotein reductase] + O2 = an alcohol + oxidized [NADPH--hemoprotein reductase] + H2O + H(+). The enzyme catalyses estrone + reduced [NADPH--hemoprotein reductase] + O2 = 2-hydroxyestrone + oxidized [NADPH--hemoprotein reductase] + H2O + H(+). It carries out the reaction estrone + reduced [NADPH--hemoprotein reductase] + O2 = 4-hydroxyestrone + oxidized [NADPH--hemoprotein reductase] + H2O + H(+). The catalysed reaction is estrone + reduced [NADPH--hemoprotein reductase] + O2 = 6alpha-hydroxyestrone + oxidized [NADPH--hemoprotein reductase] + H2O + H(+). It catalyses the reaction estrone + reduced [NADPH--hemoprotein reductase] + O2 = 15alpha-hydroxyestrone + oxidized [NADPH--hemoprotein reductase] + H2O + H(+). The enzyme catalyses estrone + reduced [NADPH--hemoprotein reductase] + O2 = 16alpha-hydroxyestrone + oxidized [NADPH--hemoprotein reductase] + H2O + H(+). It carries out the reaction 17beta-estradiol + reduced [NADPH--hemoprotein reductase] + O2 = 2-hydroxy-17beta-estradiol + oxidized [NADPH--hemoprotein reductase] + H2O + H(+). The catalysed reaction is 17beta-estradiol + reduced [NADPH--hemoprotein reductase] + O2 = 4-hydroxy-17beta-estradiol + oxidized [NADPH--hemoprotein reductase] + H2O + H(+). It catalyses the reaction 17beta-estradiol + reduced [NADPH--hemoprotein reductase] + O2 = 6alpha-hydroxy-17beta-estradiol + oxidized [NADPH--hemoprotein reductase] + H2O + H(+). The enzyme catalyses 17beta-estradiol + reduced [NADPH--hemoprotein reductase] + O2 = 7alpha-hydroxy-17beta-estradiol + oxidized [NADPH--hemoprotein reductase] + H2O + H(+). It carries out the reaction 17beta-estradiol + reduced [NADPH--hemoprotein reductase] + O2 = 15alpha-hydroxy-17beta-estradiol + oxidized [NADPH--hemoprotein reductase] + H2O + H(+). The catalysed reaction is (5Z,8Z,11Z)-eicosatrienoate + reduced [NADPH--hemoprotein reductase] + O2 = 19-hydroxy-(5Z,8Z,11Z)-eicosatrienoate + oxidized [NADPH--hemoprotein reductase] + H2O + H(+). It catalyses the reaction (5Z,8Z,11Z,14Z)-eicosatetraenoate + reduced [NADPH--hemoprotein reductase] + O2 = 16-hydroxy-(5Z,8Z,11Z,14Z)-eicosatetraenoate + oxidized [NADPH--hemoprotein reductase] + H2O + H(+). The enzyme catalyses (5Z,8Z,11Z,14Z)-eicosatetraenoate + reduced [NADPH--hemoprotein reductase] + O2 = 17-hydroxy-(5Z,8Z,11Z,14Z)-eicosatetraenoate + oxidized [NADPH--hemoprotein reductase] + H2O + H(+). It carries out the reaction (5Z,8Z,11Z,14Z)-eicosatetraenoate + reduced [NADPH--hemoprotein reductase] + O2 = 18-hydroxy-(5Z,8Z,11Z,14Z)-eicosatetraenoate + oxidized [NADPH--hemoprotein reductase] + H2O + H(+). The catalysed reaction is (5Z,8Z,11Z,14Z)-eicosatetraenoate + reduced [NADPH--hemoprotein reductase] + O2 = 19-hydroxy-(5Z,8Z,11Z,14Z)-eicosatetraenoate + oxidized [NADPH--hemoprotein reductase] + H2O + H(+). It catalyses the reaction (5Z,8Z,11Z,14Z,17Z)-eicosapentaenoate + reduced [NADPH--hemoprotein reductase] + O2 = 19-hydroxy-(5Z,8Z,11Z,14Z,17Z)-eicosapentaenoate + oxidized [NADPH--hemoprotein reductase] + H2O + H(+). The enzyme catalyses (5Z,8Z,11Z,14Z)-eicosatetraenoate + reduced [NADPH--hemoprotein reductase] + O2 = (8R,9S)-epoxy-(5Z,11Z,14Z)-eicosatrienoate + oxidized [NADPH--hemoprotein reductase] + H2O + H(+). It carries out the reaction (5Z,8Z,11Z,14Z)-eicosatetraenoate + reduced [NADPH--hemoprotein reductase] + O2 = (11R,12S)-epoxy-(5Z,8Z,14Z)-eicosatrienoate + oxidized [NADPH--hemoprotein reductase] + H2O + H(+). The catalysed reaction is (5Z,8Z,11Z,14Z)-eicosatetraenoate + reduced [NADPH--hemoprotein reductase] + O2 = (14S,15R)-epoxy-(5Z,8Z,11Z)-eicosatrienoate + oxidized [NADPH--hemoprotein reductase] + H2O + H(+). It catalyses the reaction (5Z,8Z,11Z,14Z)-eicosatetraenoate + reduced [NADPH--hemoprotein reductase] + O2 = (14R,15S)-epoxy-(5Z,8Z,11Z)-eicosatrienoate + oxidized [NADPH--hemoprotein reductase] + H2O + H(+). The enzyme catalyses (5Z,8Z,11Z,14Z,17Z)-eicosapentaenoate + reduced [NADPH--hemoprotein reductase] + O2 = (17R,18S)-epoxy-(5Z,8Z,11Z,14Z)-eicosatetraenoate + oxidized [NADPH--hemoprotein reductase] + H2O + H(+). It carries out the reaction (4Z,7Z,10Z,13Z,16Z,19Z)-docosahexaenoate + reduced [NADPH--hemoprotein reductase] + O2 = (19S,20R)-epoxy-(4Z,7Z,10Z,13Z,16Z)-docosapentaenoate + oxidized [NADPH--hemoprotein reductase] + H2O + H(+). The catalysed reaction is (4Z,7Z,10Z,13Z,16Z,19Z)-docosahexaenoate + reduced [NADPH--hemoprotein reductase] + O2 = (19R,20S)-epoxy-(4Z,7Z,10Z,13Z,16Z)-docosapentaenoate + oxidized [NADPH--hemoprotein reductase] + H2O + H(+). It catalyses the reaction all-trans-retinol + reduced [NADPH--hemoprotein reductase] + O2 = all-trans-retinal + oxidized [NADPH--hemoprotein reductase] + 2 H2O + H(+). The enzyme catalyses all-trans-retinal + reduced [NADPH--hemoprotein reductase] + O2 = all-trans-retinoate + oxidized [NADPH--hemoprotein reductase] + H2O + 2 H(+). It carries out the reaction (13S)-hydroperoxy-(9Z,11E)-octadecadienoate = 13-oxo-(9Z,11E)-octadecadienoate + H2O. The catalysed reaction is (12S)-hydroperoxy-(5Z,8Z,10E,14Z)-eicosatetraenoate = 12-oxo-(5Z,8Z,10E,14Z)-eicosatetraenoate + H2O. It catalyses the reaction (15S)-hydroperoxy-(5Z,8Z,11Z,13E)-eicosatetraenoate = 15-oxo-(5Z,8Z,11Z,13E)-eicosatetraenoate + H2O. The enzyme catalyses (5S)-hydroperoxy-(6E,8Z,11Z,14Z)-eicosatetraenoate = 5-oxo-(6E,8Z,11Z,14Z)-eicosatetraenoate + H2O. It participates in steroid hormone biosynthesis. It functions in the pathway lipid metabolism; fatty acid metabolism. Its pathway is cofactor metabolism; retinol metabolism. Functionally, a cytochrome P450 monooxygenase involved in the metabolism of various endogenous substrates, including fatty acids, steroid hormones and vitamins. Mechanistically, uses molecular oxygen inserting one oxygen atom into a substrate, and reducing the second into a water molecule, with two electrons provided by NADPH via cytochrome P450 reductase (CPR; NADPH-ferrihemoprotein reductase). Catalyzes the hydroxylation of carbon-hydrogen bonds. Exhibits high catalytic activity for the formation of hydroxyestrogens from estrone (E1) and 17beta-estradiol (E2), namely 2-hydroxy E1 and E2, as well as D-ring hydroxylated E1 and E2 at the C15alpha and C16alpha positions. Displays different regioselectivities for polyunsaturated fatty acids (PUFA) hydroxylation. Catalyzes the epoxidation of double bonds of certain PUFA. Converts arachidonic acid toward epoxyeicosatrienoic acid (EET) regioisomers, 8,9-, 11,12-, and 14,15-EET, that function as lipid mediators in the vascular system. Displays an absolute stereoselectivity in the epoxidation of eicosapentaenoic acid (EPA) producing the 17(R),18(S) enantiomer. May play an important role in all-trans retinoic acid biosynthesis in extrahepatic tissues. Catalyzes two successive oxidative transformation of all-trans retinol to all-trans retinal and then to the active form all-trans retinoic acid. May also participate in eicosanoids metabolism by converting hydroperoxide species into oxo metabolites (lipoxygenase-like reaction, NADPH-independent). This Macaca fascicularis (Crab-eating macaque) protein is Cytochrome P450 1A1 (CYP1A1).